The primary structure comprises 148 residues: Flavodoxin (148 aa).

The Flavodoxin-like domain occupies 4-145; sequence ALIVYGSTTG…DIVGWAHDVR (142 aa).

This sequence belongs to the flavodoxin family. FMN is required as a cofactor.

Its function is as follows. Low-potential electron donor to a number of redox enzymes. The polypeptide is Flavodoxin (Nitratidesulfovibrio vulgaris (strain ATCC 29579 / DSM 644 / CCUG 34227 / NCIMB 8303 / VKM B-1760 / Hildenborough) (Desulfovibrio vulgaris)).